A 507-amino-acid chain; its full sequence is L-threonine dehydratase biosynthetic IlvA (507 aa).

N6-(pyridoxal phosphate)lysine is present on lysine 52. Pyridoxal 5'-phosphate contacts are provided by residues asparagine 79, 182 to 186 (GGGGL), and serine 309. 2 consecutive ACT-like domains span residues 333 to 404 (AVFA…DLTH) and 427 to 498 (RLFR…EESA).

The protein belongs to the serine/threonine dehydratase family. As to quaternary structure, homotetramer. Requires pyridoxal 5'-phosphate as cofactor.

It carries out the reaction L-threonine = 2-oxobutanoate + NH4(+). Its pathway is amino-acid biosynthesis; L-isoleucine biosynthesis; 2-oxobutanoate from L-threonine: step 1/1. Catalyzes the anaerobic formation of alpha-ketobutyrate and ammonia from threonine in a two-step reaction. The first step involved a dehydration of threonine and a production of enamine intermediates (aminocrotonate), which tautomerizes to its imine form (iminobutyrate). Both intermediates are unstable and short-lived. The second step is the nonenzymatic hydrolysis of the enamine/imine intermediates to form 2-ketobutyrate and free ammonia. In the low water environment of the cell, the second step is accelerated by RidA. The sequence is that of L-threonine dehydratase biosynthetic IlvA (ilvA) from Burkholderia multivorans (strain ATCC 17616 / 249).